A 127-amino-acid chain; its full sequence is Fluoride-specific ion channel FluC (127 aa).

A run of 4 helical transmembrane segments spans residues 4–24, 35–55, 71–91, and 101–121; these read IMLA…WLGL, VGTL…LAWF, TGLC…VFLL, and LNVA…FWLF. Na(+)-binding residues include Gly-75 and Thr-78.

Belongs to the fluoride channel Fluc/FEX (TC 1.A.43) family.

The protein localises to the cell inner membrane. It carries out the reaction fluoride(in) = fluoride(out). With respect to regulation, na(+) is not transported, but it plays an essential structural role and its presence is essential for fluoride channel function. Its function is as follows. Fluoride-specific ion channel. Important for reducing fluoride concentration in the cell, thus reducing its toxicity. The protein is Fluoride-specific ion channel FluC of Cronobacter sakazakii (strain ATCC BAA-894) (Enterobacter sakazakii).